The primary structure comprises 347 residues: Phenylalanine--tRNA ligase alpha subunit (347 aa).

Glu-261 contributes to the Mg(2+) binding site.

This sequence belongs to the class-II aminoacyl-tRNA synthetase family. Phe-tRNA synthetase alpha subunit type 1 subfamily. As to quaternary structure, tetramer of two alpha and two beta subunits. Requires Mg(2+) as cofactor.

The protein localises to the cytoplasm. The catalysed reaction is tRNA(Phe) + L-phenylalanine + ATP = L-phenylalanyl-tRNA(Phe) + AMP + diphosphate + H(+). This Streptococcus thermophilus (strain ATCC BAA-491 / LMD-9) protein is Phenylalanine--tRNA ligase alpha subunit.